Consider the following 471-residue polypeptide: Glutamate--tRNA ligase (471 aa).

Residues 9-19 (PSPTGYLHVGG) carry the 'HIGH' region motif. Positions 98, 100, 125, and 127 each coordinate Zn(2+). The short motif at 237-241 (KLSKR) is the 'KMSKS' region element. Position 240 (K240) interacts with ATP.

Belongs to the class-I aminoacyl-tRNA synthetase family. Glutamate--tRNA ligase type 1 subfamily. In terms of assembly, monomer. Zn(2+) is required as a cofactor.

The protein resides in the cytoplasm. The catalysed reaction is tRNA(Glu) + L-glutamate + ATP = L-glutamyl-tRNA(Glu) + AMP + diphosphate. In terms of biological role, catalyzes the attachment of glutamate to tRNA(Glu) in a two-step reaction: glutamate is first activated by ATP to form Glu-AMP and then transferred to the acceptor end of tRNA(Glu). In Salmonella arizonae (strain ATCC BAA-731 / CDC346-86 / RSK2980), this protein is Glutamate--tRNA ligase.